The primary structure comprises 360 residues: Photosystem II protein D1 1 (360 aa).

A run of 3 helical transmembrane segments spans residues 29-46 (YVGW…TAAI), 118-133 (HFLI…QWEL), and 142-156 (WIPV…AATA). His-118 serves as a coordination point for chlorophyll a. Tyr-126 provides a ligand contact to pheophytin a. [CaMn4O5] cluster contacts are provided by Asp-170 and Glu-189. The helical transmembrane segment at 197–218 (FHMIGVAGVFGGALFSAMHGSL) threads the bilayer. His-198 contributes to the chlorophyll a binding site. Residues His-215 and 264-265 (SF) each bind a quinone. Residue His-215 participates in Fe cation binding. His-272 is a binding site for Fe cation. Residues 274 to 288 (FLAAWPVIGIWFAAL) traverse the membrane as a helical segment. The [CaMn4O5] cluster site is built by His-332, Glu-333, Asp-342, and Ala-344. Positions 345 to 360 (SGEVQPIALAAPAIAS) are excised as a propeptide.

This sequence belongs to the reaction center PufL/M/PsbA/D family. In terms of assembly, PSII is composed of 1 copy each of membrane proteins PsbA, PsbB, PsbC, PsbD, PsbE, PsbF, PsbH, PsbI, PsbJ, PsbK, PsbL, PsbM, PsbT, PsbX, PsbY, PsbZ, Psb30/Ycf12, peripheral proteins PsbO, CyanoQ (PsbQ), PsbU, PsbV and a large number of cofactors. It forms dimeric complexes. The cofactor is The D1/D2 heterodimer binds P680, chlorophylls that are the primary electron donor of PSII, and subsequent electron acceptors. It shares a non-heme iron and each subunit binds pheophytin, quinone, additional chlorophylls, carotenoids and lipids. D1 provides most of the ligands for the Mn4-Ca-O5 cluster of the oxygen-evolving complex (OEC). There is also a Cl(-1) ion associated with D1 and D2, which is required for oxygen evolution. The PSII complex binds additional chlorophylls, carotenoids and specific lipids.. Post-translationally, tyr-161 forms a radical intermediate that is referred to as redox-active TyrZ, YZ or Y-Z. In terms of processing, C-terminally processed by CtpA; processing is essential to allow assembly of the oxygen-evolving complex and thus photosynthetic growth.

It is found in the cellular thylakoid membrane. The enzyme catalyses 2 a plastoquinone + 4 hnu + 2 H2O = 2 a plastoquinol + O2. Photosystem II (PSII) is a light-driven water:plastoquinone oxidoreductase that uses light energy to abstract electrons from H(2)O, generating O(2) and a proton gradient subsequently used for ATP formation. It consists of a core antenna complex that captures photons, and an electron transfer chain that converts photonic excitation into a charge separation. The D1/D2 (PsbA/PsbD) reaction center heterodimer binds P680, the primary electron donor of PSII as well as several subsequent electron acceptors. In Trichormus variabilis (strain ATCC 29413 / PCC 7937) (Anabaena variabilis), this protein is Photosystem II protein D1 1.